A 176-amino-acid polypeptide reads, in one-letter code: MFLIITRDTMFFTAMKNILSKGNVVHIQNEEEIDVMLHQNAFVIIDTLMNNVFHSNFLTQIERLKPVHVIIFSPFNIKRCLGKVPVTFVPRTITIIDFVALINGSYCSVPEANVSLSRKQHQVLSCIANQMTTEDILEKLKISLKTFYCHKHNIMMILNLKRINELVRHQHIDYLV.

Residues 109–174 form the HTH luxR-type domain; that stretch reads VPEANVSLSR…ELVRHQHIDY (66 aa). The H-T-H motif DNA-binding region spans 133-152; the sequence is TEDILEKLKISLKTFYCHKH.

In terms of biological role, may act as a transcriptional regulator of dctA. Could be involved in the regulation of the genes coding for the type III secretion system in enterohaemorragic strains. The chain is HTH-type transcriptional regulator DctR (dctR) from Escherichia coli O157:H7.